Reading from the N-terminus, the 390-residue chain is 2-oxoisovalerate dehydrogenase subunit beta, mitochondrial (390 aa).

The transit peptide at 1-48 (MAAVAARAGGLLRLGAAGAERRRRGLRCAALVQGFLQPAVDDASQKRR) directs the protein to the mitochondrion. Tyr150 is a thiamine diphosphate binding site. 5 residues coordinate K(+): Gly176, Leu178, Thr179, Cys226, and Asp229. At Lys230 the chain carries N6-acetyllysine. Residue Asn231 participates in K(+) binding. Lys239 is modified (N6-acetyllysine).

As to quaternary structure, heterotetramer of 2 alpha/BCKDHA and 2 beta chains/BCKDHB that forms the branched-chain alpha-keto acid decarboxylase (E1) component of the BCKD complex. The branched-chain alpha-ketoacid dehydrogenase is a large complex composed of three major building blocks E1, E2 and E3. It is organized around E2, a 24-meric cubic core composed of DBT, to which are associated 6 to 12 copies of E1, and approximately 6 copies of the dehydrogenase E3, a DLD dimer. The cofactor is thiamine diphosphate.

Its subcellular location is the mitochondrion matrix. The catalysed reaction is N(6)-[(R)-lipoyl]-L-lysyl-[protein] + 3-methyl-2-oxobutanoate + H(+) = N(6)-[(R)-S(8)-2-methylpropanoyldihydrolipoyl]-L-lysyl-[protein] + CO2. Functionally, together with BCKDHA forms the heterotetrameric E1 subunit of the mitochondrial branched-chain alpha-ketoacid dehydrogenase (BCKD) complex. The BCKD complex catalyzes the multi-step oxidative decarboxylation of alpha-ketoacids derived from the branched-chain amino-acids valine, leucine and isoleucine producing CO2 and acyl-CoA which is subsequently utilized to produce energy. The E1 subunit catalyzes the first step with the decarboxylation of the alpha-ketoacid forming an enzyme-product intermediate. A reductive acylation mediated by the lipoylamide cofactor of E2 extracts the acyl group from the E1 active site for the next step of the reaction. In Rattus norvegicus (Rat), this protein is 2-oxoisovalerate dehydrogenase subunit beta, mitochondrial.